Consider the following 339-residue polypeptide: ADP,ATP carrier protein (339 aa).

Solcar repeat units follow at residues 39–133 (MAFV…IKGL), 145–234 (RFFV…AKGV), and 246–328 (AKWA…IKKF). Transmembrane regions (helical) follow at residues 41–70 (FVKDLLAGGTAGAISKTAVAPIERVKLLLQ), 110–134 (LANVVRYFPTQAFNFAFKDTIKGLF), 144–164 (WRFFVVNLASGGLAGAGSLLI), 212–232 (VSVQGIIVYRGAYFGLYDTAK), and 245–265 (FAKWAVAQAVTAGAGVLSYPF). 2 residues coordinate ADP: Arg-115 and Lys-127. An ADP-binding site is contributed by Arg-269. The segment at 269–274 (RRRLMM) is important for transport activity. Positions 269-274 (RRRLMM) match the Nucleotide carrier signature motif motif. The helical transmembrane segment at 305–322 (AWSNVLRGAGGAFVLVLY) threads the bilayer.

This sequence belongs to the mitochondrial carrier (TC 2.A.29) family. As to quaternary structure, monomer.

The protein resides in the mitochondrion inner membrane. It catalyses the reaction ADP(in) + ATP(out) = ADP(out) + ATP(in). The matrix-open state (m-state) is inhibited by the membrane-permeable bongkrekic acid (BKA). The cytoplasmic-open state (c-state) is inhibited by the membrane-impermeable toxic inhibitor carboxyatractyloside (CATR). ADP:ATP antiporter that mediates import of ADP into the mitochondrial matrix for ATP synthesis, and export of ATP out to fuel the cell. Cycles between the cytoplasmic-open state (c-state) and the matrix-open state (m-state): operates by the alternating access mechanism with a single substrate-binding site intermittently exposed to either the cytosolic (c-state) or matrix (m-state) side of the inner mitochondrial membrane. This Parachlorella kessleri (Green alga) protein is ADP,ATP carrier protein.